The primary structure comprises 142 residues: Large ribosomal subunit protein uL13 (142 aa).

The protein belongs to the universal ribosomal protein uL13 family. Part of the 50S ribosomal subunit.

Functionally, this protein is one of the early assembly proteins of the 50S ribosomal subunit, although it is not seen to bind rRNA by itself. It is important during the early stages of 50S assembly. This chain is Large ribosomal subunit protein uL13, found in Pseudomonas syringae pv. syringae (strain B728a).